The following is a 490-amino-acid chain: ATP synthase subunit beta, chloroplastic (490 aa).

G170–T177 serves as a coordination point for ATP.

Belongs to the ATPase alpha/beta chains family. F-type ATPases have 2 components, CF(1) - the catalytic core - and CF(0) - the membrane proton channel. CF(1) has five subunits: alpha(3), beta(3), gamma(1), delta(1), epsilon(1). CF(0) has four main subunits: a(1), b(1), b'(1) and c(9-12).

It localises to the plastid. It is found in the chloroplast thylakoid membrane. The catalysed reaction is ATP + H2O + 4 H(+)(in) = ADP + phosphate + 5 H(+)(out). Its function is as follows. Produces ATP from ADP in the presence of a proton gradient across the membrane. The catalytic sites are hosted primarily by the beta subunits. This Ipomoea wrightii (Wright's morning glory) protein is ATP synthase subunit beta, chloroplastic.